We begin with the raw amino-acid sequence, 167 residues long: Ribosome maturation factor RimP (167 aa).

Belongs to the RimP family.

The protein resides in the cytoplasm. Its function is as follows. Required for maturation of 30S ribosomal subunits. This chain is Ribosome maturation factor RimP, found in Cytophaga hutchinsonii (strain ATCC 33406 / DSM 1761 / CIP 103989 / NBRC 15051 / NCIMB 9469 / D465).